The chain runs to 264 residues: Apolipoprotein A-I (264 aa).

An N-terminal signal peptide occupies residues 1–18 (MKAVVLALAVLFLTGSQA). 2 repeat units span residues 67–88 (LHLLDNWDTLSNTVGRLREQLG) and 89–110 (PVTHEFWANLEKDTEWLRQEMN). The interval 67–264 (LHLLDNWDTL…DEASKKLNAQ (198 aa)) is 10 X approximate tandem repeats. Met109 carries the methionine sulfoxide modification. A 3; half-length repeat occupies 111 to 121 (KDLEEVKVKVQ). A run of 5 repeats spans residues 122-143 (PYLDDFQKKWQEEVERYREKVG), 144-165 (PLGAELREGARQKLQELHEKLT), 166-187 (PLGEDLRDRARVHVDALRTQLA), 188-207 (PYSDQMRERLATRLAAIRDS), and 208-229 (PSLAVYHAKASEHLKTLSEKAK). Residues 230 to 240 (PALEDLRQGLM) form a 9; half-length repeat. Repeat unit 10 spans residues 241-264 (PVLENLKTTVLAAIDEASKKLNAQ).

It belongs to the apolipoprotein A1/A4/E family. As to quaternary structure, homodimer. Interacts with APOA1BP and CLU. Component of a sperm activating protein complex (SPAP), consisting of APOA1, an immunoglobulin heavy chain, an immunoglobulin light chain and albumin. Interacts with NDRG1. Interacts with SCGB3A2. Interacts with NAXE and YJEFN3. In terms of processing, glycosylated. Post-translationally, palmitoylated. Phosphorylation sites are present in the extracellular medium.

Its subcellular location is the secreted. Functionally, participates in the reverse transport of cholesterol from tissues to the liver for excretion by promoting cholesterol efflux from tissues and by acting as a cofactor for the lecithin cholesterol acyltransferase (LCAT). As part of the SPAP complex, activates spermatozoa motility. The chain is Apolipoprotein A-I (APOA1) from Jaculus jaculus (Lesser Egyptian jerboa).